The chain runs to 416 residues: ORC1-type DNA replication protein 9 (416 aa).

ATP is bound by residues 79–83, tyrosine 226, and arginine 238; that span reads SGKSL.

It belongs to the CDC6/cdc18 family.

Its function is as follows. Involved in regulation of DNA replication. This is ORC1-type DNA replication protein 9 (cdc6i) from Haloarcula marismortui (strain ATCC 43049 / DSM 3752 / JCM 8966 / VKM B-1809) (Halobacterium marismortui).